The primary structure comprises 158 residues: Transcriptional repressor NrdR (158 aa).

Positions 1–20 (MRCPSCGSLDTQVKDSRPTE) are disordered. The segment at 3-34 (CPSCGSLDTQVKDSRPTEDSSVIRRRRVCLTC) is a zinc-finger region. An ATP-cone domain is found at 49–139 (LTVIKRNGRR…VYRNFREAKD (91 aa)).

It belongs to the NrdR family. Zn(2+) is required as a cofactor.

Its function is as follows. Negatively regulates transcription of bacterial ribonucleotide reductase nrd genes and operons by binding to NrdR-boxes. The protein is Transcriptional repressor NrdR of Afipia carboxidovorans (strain ATCC 49405 / DSM 1227 / KCTC 32145 / OM5) (Oligotropha carboxidovorans).